The chain runs to 163 residues: CDP-archaeol synthase (163 aa).

The next 5 membrane-spanning stretches (helical) occupy residues 4–24, 52–72, 75–95, 107–127, and 128–148; these read LLLGLIYYIPALVANGSAPFI, LLLSLTFGTTVGAIISRFLGI, IIIGFVESLGAMLGDMLGAFI, APILDQLDFILGATVVLISFN, and VNLNIYQVVFVCVLVIALHMF.

This sequence belongs to the CDP-archaeol synthase family. Requires Mg(2+) as cofactor.

It localises to the cell membrane. It catalyses the reaction 2,3-bis-O-(geranylgeranyl)-sn-glycerol 1-phosphate + CTP + H(+) = CDP-2,3-bis-O-(geranylgeranyl)-sn-glycerol + diphosphate. The protein operates within membrane lipid metabolism; glycerophospholipid metabolism. Catalyzes the formation of CDP-2,3-bis-(O-geranylgeranyl)-sn-glycerol (CDP-archaeol) from 2,3-bis-(O-geranylgeranyl)-sn-glycerol 1-phosphate (DGGGP) and CTP. This reaction is the third ether-bond-formation step in the biosynthesis of archaeal membrane lipids. The sequence is that of CDP-archaeol synthase from Sulfolobus acidocaldarius (strain ATCC 33909 / DSM 639 / JCM 8929 / NBRC 15157 / NCIMB 11770).